Here is a 1064-residue protein sequence, read N- to C-terminus: Lethal(2) giant larvae protein homolog 1 (1064 aa).

WD repeat units follow at residues 38–71 (SALAFDPELRIMAIGTRSGAVKIYGAPGVEFTGL), 78–119 (VTQM…ALSF), 139–176 (VTVVLLVAASDIAALGTEGSSVFFLDVTTLTLLEGQTL), 200–234 (SLQGHLRDPTKILIGYSRGLLVIWNQASQCVDHIF), 240–272 (LESLCWGRDSSTVVSSHSDGSYAVWSVDAGSFP), 290–332 (AINK…ETLV), 340–374 (IIDFFTVHSTRPEDEFDDPQALAVLLEEELVVLDL), 396–474 (TCSA…YKLS), 518–593 (QKVA…RVLV), 602–663 (TAVT…LRQS), 723–783 (VRCL…KEVQ), 792–844 (AIAV…VSAK), 849–902 (LTAH…VHYS), and 916–939 (VFTRHGQGFYLISPSEFERFSLSA). Serine 663 carries the phosphoserine modification. Phosphothreonine is present on threonine 958. The tract at residues 966–1010 (ESPKLSQANGTPSILLAPQSLDGSPDPAHSMGPDTPEPPEAALSP) is disordered. Residues serine 967 and serine 985 each carry the phosphoserine modification.

Belongs to the WD repeat L(2)GL family. Associated with nonmuscle myosin II heavy chain. Interacts with PRKCI/aPKC, PARD6B/Par-6 and PARD6A. Interacts with STX4A. Interacts with RAB10 (GDP-bound form); the interaction is direct and promotes RAB10 association with membranes and activation through competition with the Rab inhibitor GDI1. Interacts with DCAF1. In terms of processing, phosphorylated at least at Ser-663 by PRKCI. In terms of tissue distribution, expressed in brain, kidney, and muscle but is barely seen in heart and placenta. Down-regulated or lost in all cell lines and in most of the tumor samples analyzed. Loss was associated with advanced stage of the disease.

The protein resides in the early endosome membrane. The protein localises to the golgi apparatus. Its subcellular location is the trans-Golgi network membrane. It localises to the golgi apparatus membrane. It is found in the cell projection. The protein resides in the axon. The protein localises to the cytoplasm. Its subcellular location is the cytoskeleton. Cortical cytoskeleton protein found in a complex involved in maintaining cell polarity and epithelial integrity. Involved in the regulation of mitotic spindle orientation, proliferation, differentiation and tissue organization of neuroepithelial cells. Involved in axonogenesis through RAB10 activation thereby regulating vesicular membrane trafficking toward the axonal plasma membrane. In Homo sapiens (Human), this protein is Lethal(2) giant larvae protein homolog 1 (LLGL1).